We begin with the raw amino-acid sequence, 109 residues long: Putative double-stranded DNA mimic protein YciU (109 aa).

It belongs to the putative dsDNA mimic protein family.

Functionally, may act as a double-stranded DNA (dsDNA) mimic. Probably regulates the activity of a dsDNA-binding protein. This chain is Putative double-stranded DNA mimic protein YciU, found in Salmonella arizonae (strain ATCC BAA-731 / CDC346-86 / RSK2980).